The primary structure comprises 124 residues: Small ribosomal subunit protein uS12 (124 aa).

Aspartate 89 is subject to 3-methylthioaspartic acid. Residues 104–124 form a disordered region; sequence SAGVQNRNRGRSKYGTKRPKK. The span at 111–124 shows a compositional bias: basic residues; that stretch reads NRGRSKYGTKRPKK.

It belongs to the universal ribosomal protein uS12 family. Part of the 30S ribosomal subunit. Contacts proteins S8 and S17. May interact with IF1 in the 30S initiation complex.

Its function is as follows. With S4 and S5 plays an important role in translational accuracy. Functionally, interacts with and stabilizes bases of the 16S rRNA that are involved in tRNA selection in the A site and with the mRNA backbone. Located at the interface of the 30S and 50S subunits, it traverses the body of the 30S subunit contacting proteins on the other side and probably holding the rRNA structure together. The combined cluster of proteins S8, S12 and S17 appears to hold together the shoulder and platform of the 30S subunit. This Desulforamulus reducens (strain ATCC BAA-1160 / DSM 100696 / MI-1) (Desulfotomaculum reducens) protein is Small ribosomal subunit protein uS12.